Reading from the N-terminus, the 99-residue chain is A-type ATP synthase subunit F (99 aa).

It belongs to the V-ATPase F subunit family. In terms of assembly, has multiple subunits with at least A(3), B(3), C, D, E, F, H, I and proteolipid K(x).

The protein localises to the cell membrane. Its function is as follows. Component of the A-type ATP synthase that produces ATP from ADP in the presence of a proton gradient across the membrane. The sequence is that of A-type ATP synthase subunit F from Methanococcus maripaludis (strain DSM 14266 / JCM 13030 / NBRC 101832 / S2 / LL).